Consider the following 455-residue polypeptide: Transcriptional regulatory protein FlbD (455 aa).

Residues R2 to T114 enclose the Response regulatory domain. The Sigma-54 factor interaction domain maps to M120–L349. Residues G148–E155 and A211–E220 each bind ATP. Residues R416–K435 constitute a DNA-binding region (H-T-H motif).

The protein resides in the cytoplasm. Activation of sigma-54-dependent flagellar gene promoters and strong negative autoregulatory effects on its own promoter. The synthesis and function of FlbD in C.crescentus is controlled by an internal cell-cycle clock. The protein is Transcriptional regulatory protein FlbD (flbD) of Caulobacter vibrioides (strain ATCC 19089 / CIP 103742 / CB 15) (Caulobacter crescentus).